The primary structure comprises 75 residues: Small ribosomal subunit protein bS18 (75 aa).

The protein belongs to the bacterial ribosomal protein bS18 family. Part of the 30S ribosomal subunit. Forms a tight heterodimer with protein bS6.

Binds as a heterodimer with protein bS6 to the central domain of the 16S rRNA, where it helps stabilize the platform of the 30S subunit. This chain is Small ribosomal subunit protein bS18, found in Methylobacillus flagellatus (strain ATCC 51484 / DSM 6875 / VKM B-1610 / KT).